The sequence spans 722 residues: Golgin subfamily A member 5 (722 aa).

The Cytoplasmic segment spans residues 1-689 (MSWFTDLAGR…IFLRRYPIAR (689 aa)). 2 disordered regions span residues 90–158 (TRSS…VKPI) and 194–215 (TLSDSGSSASLSTTGDPKSHEL). Low complexity predominate over residues 91–109 (RSSIESSHNSSVNVSSHRS). A compositionally biased stretch (basic and acidic residues) spans 134–148 (DKVHSSSQKETRKES). Positions 149–158 (ASVNQAVKPI) are enriched in polar residues. The span at 195–209 (LSDSGSSASLSTTGD) shows a compositional bias: low complexity. Positions 211–622 (KSHELSNLRL…LEHQLKNVQG (412 aa)) form a coiled coil. Residues 690–710 (VFIIIYMALLHLWVMIVLLTY) traverse the membrane as a helical; Anchor for type IV membrane protein segment. Over 711 to 722 (TPEMHHDTPSGK) the chain is Lumenal.

Its subcellular location is the golgi apparatus membrane. Involved in maintaining Golgi structure. Stimulates the formation of Golgi stacks and ribbons. Involved in intra-Golgi retrograde transport. The chain is Golgin subfamily A member 5 (golga5) from Xenopus laevis (African clawed frog).